Here is a 371-residue protein sequence, read N- to C-terminus: Queuine tRNA-ribosyltransferase (371 aa).

The Proton acceptor role is filled by aspartate 90. Substrate is bound by residues aspartate 90 to phenylalanine 94, aspartate 144, glutamine 185, and glycine 212. Residues glycine 243 to aspartate 249 are RNA binding. Aspartate 262 functions as the Nucleophile in the catalytic mechanism. The tract at residues threonine 267 to arginine 271 is RNA binding; important for wobble base 34 recognition. Zn(2+)-binding residues include cysteine 300, cysteine 302, cysteine 305, and histidine 331.

Belongs to the queuine tRNA-ribosyltransferase family. Homodimer. Within each dimer, one monomer is responsible for RNA recognition and catalysis, while the other monomer binds to the replacement base PreQ1. It depends on Zn(2+) as a cofactor.

The catalysed reaction is 7-aminomethyl-7-carbaguanine + guanosine(34) in tRNA = 7-aminomethyl-7-carbaguanosine(34) in tRNA + guanine. It functions in the pathway tRNA modification; tRNA-queuosine biosynthesis. Its function is as follows. Catalyzes the base-exchange of a guanine (G) residue with the queuine precursor 7-aminomethyl-7-deazaguanine (PreQ1) at position 34 (anticodon wobble position) in tRNAs with GU(N) anticodons (tRNA-Asp, -Asn, -His and -Tyr). Catalysis occurs through a double-displacement mechanism. The nucleophile active site attacks the C1' of nucleotide 34 to detach the guanine base from the RNA, forming a covalent enzyme-RNA intermediate. The proton acceptor active site deprotonates the incoming PreQ1, allowing a nucleophilic attack on the C1' of the ribose to form the product. After dissociation, two additional enzymatic reactions on the tRNA convert PreQ1 to queuine (Q), resulting in the hypermodified nucleoside queuosine (7-(((4,5-cis-dihydroxy-2-cyclopenten-1-yl)amino)methyl)-7-deazaguanosine). The chain is Queuine tRNA-ribosyltransferase from Acidithiobacillus ferrooxidans (strain ATCC 23270 / DSM 14882 / CIP 104768 / NCIMB 8455) (Ferrobacillus ferrooxidans (strain ATCC 23270)).